Here is a 539-residue protein sequence, read N- to C-terminus: Glutamyl-tRNA(Gln) amidotransferase subunit A, mitochondrial (539 aa).

Residues Lys-94 and Ser-181 each act as charge relay system in the active site. Ser-205 serves as the catalytic Acyl-ester intermediate.

It belongs to the amidase family. GatA subfamily. Subunit of the heterotrimeric GatCAB amidotransferase (AdT) complex, composed of A, B and C subunits.

The protein resides in the mitochondrion. The catalysed reaction is L-glutamyl-tRNA(Gln) + L-glutamine + ATP + H2O = L-glutaminyl-tRNA(Gln) + L-glutamate + ADP + phosphate + H(+). Functionally, allows the formation of correctly charged Gln-tRNA(Gln) through the transamidation of misacylated Glu-tRNA(Gln) in the mitochondria. The reaction takes place in the presence of glutamine and ATP through an activated gamma-phospho-Glu-tRNA(Gln). In Mycosarcoma maydis (Corn smut fungus), this protein is Glutamyl-tRNA(Gln) amidotransferase subunit A, mitochondrial.